A 264-amino-acid polypeptide reads, in one-letter code: Thymidylate synthase (264 aa).

Arginine 21 is a dUMP binding site. Histidine 51 provides a ligand contact to (6R)-5,10-methylene-5,6,7,8-tetrahydrofolate. Residue 126-127 (RR) participates in dUMP binding. The Nucleophile role is filled by cysteine 146. DUMP-binding positions include 166-169 (RSGD), asparagine 177, and 207-209 (HLY). Position 169 (aspartate 169) interacts with (6R)-5,10-methylene-5,6,7,8-tetrahydrofolate. Position 263 (alanine 263) interacts with (6R)-5,10-methylene-5,6,7,8-tetrahydrofolate.

The protein belongs to the thymidylate synthase family. Bacterial-type ThyA subfamily. In terms of assembly, homodimer.

It is found in the cytoplasm. It carries out the reaction dUMP + (6R)-5,10-methylene-5,6,7,8-tetrahydrofolate = 7,8-dihydrofolate + dTMP. Its pathway is pyrimidine metabolism; dTTP biosynthesis. In terms of biological role, catalyzes the reductive methylation of 2'-deoxyuridine-5'-monophosphate (dUMP) to 2'-deoxythymidine-5'-monophosphate (dTMP) while utilizing 5,10-methylenetetrahydrofolate (mTHF) as the methyl donor and reductant in the reaction, yielding dihydrofolate (DHF) as a by-product. This enzymatic reaction provides an intracellular de novo source of dTMP, an essential precursor for DNA biosynthesis. This Brevibacillus brevis (strain 47 / JCM 6285 / NBRC 100599) protein is Thymidylate synthase.